The chain runs to 331 residues: MLFIDNQNINDPRINLAIEEYCVKHLDPEQQYLLFYVNQPSIIIGKNQNTIEEINTKYVEENGIIVVRRLSGGGAVYHDLGNLNFSFITKDDGDSFHNFKKFTEPVIQALHQLGVEAELSGRNDIVVDGRKISGNAQFATKGRIFSHGTLMFDSAIDHVVSALKVKKDKIESKGIKSIRSRVANISEFLDDKMTTEEFRSHLLRHIFNTNDVGNVPEYKLTEKDWETIHQISKERYQNWDWNYGRSPKFNLNHSKRYPVGSIDLHLEVKKGKIEDCKIFGDFFGVGDVSEIENLLVGKQYERSVIADVLEGVNLKHYFGNITKEDFLDLIY.

The 188-residue stretch at 27-214 (DPEQQYLLFY…HIFNTNDVGN (188 aa)) folds into the BPL/LPL catalytic domain. ATP-binding positions include arginine 69, 74 to 77 (GAVY), and lysine 131. (R)-lipoate is bound at residue lysine 131.

This sequence belongs to the LplA family.

It localises to the cytoplasm. It catalyses the reaction L-lysyl-[lipoyl-carrier protein] + (R)-lipoate + ATP = N(6)-[(R)-lipoyl]-L-lysyl-[lipoyl-carrier protein] + AMP + diphosphate + H(+). It functions in the pathway protein modification; protein lipoylation via exogenous pathway; protein N(6)-(lipoyl)lysine from lipoate: step 1/2. Its pathway is protein modification; protein lipoylation via exogenous pathway; protein N(6)-(lipoyl)lysine from lipoate: step 2/2. Its function is as follows. Catalyzes both the ATP-dependent activation of exogenously supplied lipoate to lipoyl-AMP and the transfer of the activated lipoyl onto the lipoyl domains of lipoate-dependent enzymes. Is also able to use octanoate as substrate. The polypeptide is Lipoate-protein ligase LplJ (lplJ) (Bacillus subtilis (strain 168)).